Here is a 340-residue protein sequence, read N- to C-terminus: uncharacterized protein (340 aa).

The span at 193 to 207 (KELPKEKKKSDGDKT) shows a compositional bias: basic and acidic residues. A disordered region spans residues 193-340 (KELPKEKKKS…FIPLQPKKKI (148 aa)). The span at 217-228 (FFGFWGHSGSKS) shows a compositional bias: low complexity. The span at 235-244 (EKPIEAKNEI) shows a compositional bias: basic and acidic residues. 2 stretches are compositionally biased toward polar residues: residues 263 to 279 (SDKN…SDQQ) and 307 to 328 (PAQS…SLTL).

This is an uncharacterized protein from Saccharomyces cerevisiae (strain ATCC 204508 / S288c) (Baker's yeast).